The primary structure comprises 408 residues: KGGKTQGRSAKSSRPEFDWRDPLVLEEQLTADEILIRDTFRTYCQEHLMPRIVLANRNEVFHREIISEMGELGVLGPTIKGYGCAGVSSVAYGLLARELERVDSGYRSAMSVQSSLVMHPIYAYGSEEQQQQKYLPRLAKGELLGCFGLTEPNHGSDPGSMETRALHNPSNRSYTLNGAKTWITNSPVADLFVVWARCEDNCIRGFLLEKGMRGLSAPKIEGKFSLRASATGMIIMDDVEVPEENVLPKASSLAVPFGCLNNARYGISWGVLGAAEFCLHTARQYTLDRIQFGVPLAKNQLIQRKLADMLTEITLGLHACLQLGRLKDQDKVTPEMVSLLKRNNCGKALDIARQARDMLGGNGISDEYHVIRHAMNLEAVNTYEGTHDIHALILGRAITGIQAFTTDK.

The transit peptide at 1–13 (KGGKTQGRSAKSS) directs the protein to the mitochondrion. Substrate contacts are provided by residues 107 to 108 (RS) and Ser-156. FAD-binding positions include 147–156 (FGLTEPNHGS), Ser-156, and 182–184 (WIT). N6-acetyllysine is present on Lys-210. 257-264 (FGCLNNAR) serves as a coordination point for substrate. FAD-binding positions include Arg-289, Gln-300, and 357 to 361 (DMLGG). Glu-384 serves as the catalytic Proton acceptor. Gly-385 contacts substrate. FAD contacts are provided by residues Thr-386, 386–388 (THD), and Phe-404.

It belongs to the acyl-CoA dehydrogenase family. In terms of assembly, homotetramer. The cofactor is FAD.

Its subcellular location is the mitochondrion matrix. The catalysed reaction is glutaryl-CoA + oxidized [electron-transfer flavoprotein] + 2 H(+) = (2E)-butenoyl-CoA + reduced [electron-transfer flavoprotein] + CO2. The protein operates within amino-acid metabolism; lysine degradation. It participates in amino-acid metabolism; tryptophan metabolism. In terms of biological role, catalyzes the oxidative decarboxylation of glutaryl-CoA to crotonyl-CoA and CO(2) in the degradative pathway of L-lysine, L-hydroxylysine, and L-tryptophan metabolism. It uses electron transfer flavoprotein as its electron acceptor. This is Glutaryl-CoA dehydrogenase, mitochondrial (GCDH) from Sus scrofa (Pig).